Here is a 466-residue protein sequence, read N- to C-terminus: Asparagine--tRNA ligase (466 aa).

Belongs to the class-II aminoacyl-tRNA synthetase family. Homodimer.

The protein resides in the cytoplasm. The catalysed reaction is tRNA(Asn) + L-asparagine + ATP = L-asparaginyl-tRNA(Asn) + AMP + diphosphate + H(+). The protein is Asparagine--tRNA ligase of Xylella fastidiosa (strain Temecula1 / ATCC 700964).